The primary structure comprises 406 residues: Dihydroorotase, mitochondrial (406 aa).

The transit peptide at 1–41 (MQTAATSTFFANPHVKHLPGPFLRPSPHYGALVHLPSFRNK) directs the protein to the mitochondrion. His69, His71, Lys155, His193, His231, and Asp305 together coordinate Zn(2+). The residue at position 155 (Lys155) is an N6-carboxylysine.

The protein belongs to the metallo-dependent hydrolases superfamily. DHOase family. Class II DHOase subfamily. It depends on Zn(2+) as a cofactor.

It localises to the mitochondrion. It catalyses the reaction (S)-dihydroorotate + H2O = N-carbamoyl-L-aspartate + H(+). It functions in the pathway pyrimidine metabolism; UMP biosynthesis via de novo pathway; (S)-dihydroorotate from bicarbonate: step 3/3. In Oryza sativa subsp. japonica (Rice), this protein is Dihydroorotase, mitochondrial (PYRC).